Reading from the N-terminus, the 418-residue chain is Nucleoredoxin (418 aa).

The 201-residue stretch at 109–309 folds into the Thioredoxin domain; that stretch reads KYKVTSIPSL…ESNAVQLHEG (201 aa).

It belongs to the nucleoredoxin family.

The protein resides in the cytoplasm. The protein localises to the cytosol. It is found in the nucleus. The catalysed reaction is [protein]-dithiol + NAD(+) = [protein]-disulfide + NADH + H(+). The enzyme catalyses [protein]-dithiol + NADP(+) = [protein]-disulfide + NADPH + H(+). Functionally, functions as a redox-dependent negative regulator of the Wnt signaling pathway. This is Nucleoredoxin (nxn) from Danio rerio (Zebrafish).